Here is a 572-residue protein sequence, read N- to C-terminus: MSGPRPVRAPRGTEPSALGWQQEAALRMLQNNLDPEVAEHPDKLVVYGGTGKAARDWRSFDAMVRTLRTLKQDETMLVQSGRPVGVMQTHEWAPRVLIANSNLVGDWANWEEFRRLEALGLTMYGQMTAGSWIYIGTQGILQGTYETFAAVAAKKFGGTLAGTITLTAGLGGMGGAQPLAVTMNDGVVICVDCDPRAIDRRIEHHYLDVKADSLDHALQLATEARDRRKPLSIGVLGNAAELVPQLLAMGAPIDIVTDQTSAHDPLAYLPTGIAFEDMADAAAKDPAGFTTRARESMARHVEAMVGFQDAGAEVFDYGNSIRGEAQLAGYDRAFAFPGFVPAYIRPLFCEGKGPFRWAALSGDPADIAKTDKAILDLFPENESLARWIKMAGERVHFQGLPARICWLGYGERDKAGERFNDMVASGELAAPIVIGRDHLDCGSVASPYRETEAMLDGSDAIADWPLLNAMVNVASGASWVSLHHGGGVGMGRSIHAGQVTVADGTPLAGEKIRRVLTNDPGMGVIRHVDAGYDIAESVAAERDVRVPMREGDEAHEGDAAHGSGAAREGDGV.

Residues 48–49 (GG), Gln126, 172–174 (GMG), Asp192, 238–239 (NA), 259–263 (QTSAH), 268–269 (YL), and Tyr317 each bind NAD(+). The active site involves Cys405. Gly487 lines the NAD(+) pocket. Residues 550 to 559 (EGDEAHEGDA) show a composition bias toward basic and acidic residues. Residues 550-572 (EGDEAHEGDAAHGSGAAREGDGV) form a disordered region.

This sequence belongs to the urocanase family. Requires NAD(+) as cofactor.

It localises to the cytoplasm. The catalysed reaction is 4-imidazolone-5-propanoate = trans-urocanate + H2O. The protein operates within amino-acid degradation; L-histidine degradation into L-glutamate; N-formimidoyl-L-glutamate from L-histidine: step 2/3. In terms of biological role, catalyzes the conversion of urocanate to 4-imidazolone-5-propionate. The protein is Urocanate hydratase of Streptomyces coelicolor (strain ATCC BAA-471 / A3(2) / M145).